Here is a 391-residue protein sequence, read N- to C-terminus: MGLQEHPVTPAERQPPVRGGVTIGVEEEFLLVDAASGQLAPHAEAVLAEAANGPLGAPDAVLHAEMLNSQVEAATGCCRTLEELRSQLVAARTSLDRAASVAGARIVSSGTPVLAVEGTGTSNGQRFADIAERYRAVASDYHVCGCHVHVGVPDRDTAVAVVNHLRPWLPTLLAISANSPFHLGHDTGHASWRGVQQRLYPGSGVPPHFPSRDAYDREVARLVDCGALVDDRMSFWMARPSPHLPTVELRVADALITAEETVLQAALSRALVRAALDDLAAGREGDEVSDQVAAAAVWNASRYGLRGPAVDPVPARRVPALEMVERLLRRVGPALEQTGDSALVREALAHVTGVGTGSERQRAAAAAGGPREVVAMLAAATAPGRADRLRT.

This sequence belongs to the glutamate--cysteine ligase type 2 family. YbdK subfamily.

The enzyme catalyses L-cysteine + L-glutamate + ATP = gamma-L-glutamyl-L-cysteine + ADP + phosphate + H(+). Its function is as follows. ATP-dependent carboxylate-amine ligase which exhibits weak glutamate--cysteine ligase activity. This is Putative glutamate--cysteine ligase 2-2 from Saccharopolyspora erythraea (strain ATCC 11635 / DSM 40517 / JCM 4748 / NBRC 13426 / NCIMB 8594 / NRRL 2338).